Reading from the N-terminus, the 335-residue chain is Transmembrane protein 120B (335 aa).

Residues 1 to 39 are a coiled coil; that stretch reads MSLQKCQEEWGELEKEFQQLQETHKVYKQKLEELNGLQN. A run of 6 helical transmembrane segments spans residues 100-122, 130-150, 157-177, 193-213, 268-288, and 300-320; these read GLYLNLVLGNVNVTLLSNQAKFA, FKLYLTIILLLGAITCRFVLH, VFNFLLVWYYCTLTIRESILI, VSTFLSGVMLTWPDGLMYQIF, FLLPFLFFGHFWQLYNAITLF, and QVFVLALTFLLLFLGNFLTTL.

The protein belongs to the TMEM120 family.

The protein localises to the nucleus inner membrane. Its function is as follows. Necessary for efficient adipogenesis. Does not show ion channel activity. This is Transmembrane protein 120B (tmem120b) from Xenopus tropicalis (Western clawed frog).